Reading from the N-terminus, the 304-residue chain is Dipeptide transport system permease protein DppC (304 aa).

A disordered region spans residues 1–24 (MKTEHAKPLMTPEPNSPPPEDQYT). Transmembrane regions (helical) follow at residues 41 to 61 (LAIVGLIIITSFILIAIFAPL), 108 to 128 (VGFFAVTGALIFGTTLGLIAG), 141 to 161 (IFDIMLAFPSILLAIAIVAIL), 164 to 184 (SLQNALIAIAIVNVPIFGRLV), 227 to 247 (ATLGFGTAILEAAALGFLGLG), and 271 to 291 (WTVLFPGFSIMLVVLGFNMIG). In terms of domain architecture, ABC transmembrane type-1 spans 102–291 (ARLSLQVGFF…LVVLGFNMIG (190 aa)).

This sequence belongs to the binding-protein-dependent transport system permease family. OppBC subfamily.

The protein resides in the cell membrane. In terms of biological role, probably part of the ABC transporter Dpp involved in dipeptide transport. Responsible for the translocation of the substrate across the membrane. The polypeptide is Dipeptide transport system permease protein DppC (dppC) (Alkalihalophilus pseudofirmus (strain ATCC BAA-2126 / JCM 17055 / OF4) (Bacillus pseudofirmus)).